Here is a 299-residue protein sequence, read N- to C-terminus: MKLKFTKMHGAGNDFVVLDGYTQPVNLTPAQVRALADRHFGVGADQLLLVEKPTVAGVDFRYRIFNCDGGEVEHCGNGARCFVKFVRDSGLTDQRSVRVQVQKGTITLTMQENGEVLVDMGTPVFDPERVPFATKGLQGRGEGADTLWPLDVNGTTRWISVVSMGNPHAVQVVDDVEAFPVLVEGPVIERHARFPQRVNAGFMQIVGRSEIKLRVYERGAGETLACGTGACAAVAAGIRRGLLDAPVLVHTHGGKLTITWDAAQADQPLLMAGPAATVFEGEIELPDSLADSLANSQAA.

The substrate site is built by N13, Q46, and N66. C75 serves as the catalytic Proton donor. Substrate contacts are provided by residues 76–77 (GN), N166, N199, and 217–218 (ER). The active-site Proton acceptor is C226. 227-228 (GT) provides a ligand contact to substrate.

This sequence belongs to the diaminopimelate epimerase family. In terms of assembly, homodimer.

The protein resides in the cytoplasm. It catalyses the reaction (2S,6S)-2,6-diaminopimelate = meso-2,6-diaminopimelate. The protein operates within amino-acid biosynthesis; L-lysine biosynthesis via DAP pathway; DL-2,6-diaminopimelate from LL-2,6-diaminopimelate: step 1/1. Functionally, catalyzes the stereoinversion of LL-2,6-diaminopimelate (L,L-DAP) to meso-diaminopimelate (meso-DAP), a precursor of L-lysine and an essential component of the bacterial peptidoglycan. The polypeptide is Diaminopimelate epimerase (Paraburkholderia phytofirmans (strain DSM 17436 / LMG 22146 / PsJN) (Burkholderia phytofirmans)).